The primary structure comprises 207 residues: Strobilurin A biosynthesis cluster protein r1 (207 aa).

Helical transmembrane passes span 108-128 (FIFPSLALKTTIWSVAGLLYL) and 169-189 (NLTTGVSYVLGTLVFGFPFWI).

Its subcellular location is the membrane. The protein operates within mycotoxin biosynthesis. Part of the gene cluster that mediates the biosynthesis of strobilurin A, an antifungal polyketide that contains a key beta-methoxyacrylate toxophore that targets the complex III of the mitochondrial electron transport chain. Strobilurin biosynthesis begins with construction of benzoyl CoA by step-wise elimination of ammonia from phenylalanine by the phenylalanine ammonia-lyase str11, oxygenation by str8 and retro-Claisen reaction to form benzoic acid, which is activated to its CoA thiolester benzoyl CoA by the dedicated CoA ligase str10. Benzoyl CoA forms the starter unit for the highly reducing polyketide synthase stpks1 that produces the polyketide prestrobilutin A. The FAD-dependent oxygenase str9 then catalyzes the key oxidative rearrangement responsible for the creation of the beta-methoxyacrylate toxophore. Str9 performs epoxidation of the 2,3 olefin of prestrobilutin A, followed by Meinwald rearrangement to furnish the aldehyde intermediate. Rapid enolization of the aldehyde intermediate would give the beta-methoxyacrylate skeleton and methylations catalyzed by str2 and str3 complete the synthesis and lead to the production of strobilurin A. The short-chain dehydrogenase stl2 and the dehydrogenase str4 play a role in the shunt pathway leading to the production of bolineol. The cluster encodes no obvious halogenase gene that could be involved in production of strobilurin B, nor any obvious dimethylallyl-transferase that could be involved in the production of strobilurin G. It is possible that unknown proteins encoded in, or near, the cluster (such as str1 or stl1) may form new classes of halogenases or dimethylally-transferases, or that the responsible genes are located elsewhere on the genome. Similarly, proteins encoded by str5/str6 hydrolases appear to have no chemical role in the biosynthesis of strobilurin A. Finally, no obvious self-resistance gene is found within the cluster. The chain is Strobilurin A biosynthesis cluster protein r1 from Strobilurus tenacellus.